The primary structure comprises 421 residues: CinA-like protein (421 aa).

This sequence belongs to the CinA family.

The protein is CinA-like protein of Mycobacterium sp. (strain MCS).